The following is a 476-amino-acid chain: Protein DETOXIFICATION 4 (476 aa).

Transmembrane regions (helical) follow at residues 35–55 (AVPM…SVMV), 66–86 (GVAL…FGLV), 117–137 (IPIC…LISL), 154–174 (LIPT…LLAQ), 176–196 (LVLP…AVCW), 208–228 (GAAL…SCYV), 260–280 (AAML…SGLL), 289–309 (VLSI…GVAA), 332–352 (LAGL…LFAF), 370–390 (VADL…TAVL), 408–428 (VVAY…SCEL), and 433–453 (LWCG…IVTA).

The protein belongs to the multi antimicrobial extrusion (MATE) (TC 2.A.66.1) family.

It is found in the membrane. This Arabidopsis thaliana (Mouse-ear cress) protein is Protein DETOXIFICATION 4.